Here is an 883-residue protein sequence, read N- to C-terminus: DNA mismatch repair protein MutS (883 aa).

633 to 640 (GPNMGGKS) provides a ligand contact to ATP.

It belongs to the DNA mismatch repair MutS family.

This protein is involved in the repair of mismatches in DNA. It is possible that it carries out the mismatch recognition step. This protein has a weak ATPase activity. This chain is DNA mismatch repair protein MutS, found in Bordetella pertussis (strain Tohama I / ATCC BAA-589 / NCTC 13251).